The sequence spans 206 residues: Small ribosomal subunit protein uS4 (206 aa).

The region spanning 94–156 (RRLDNVVYRL…SRRRMYFKNL (63 aa)) is the S4 RNA-binding domain.

This sequence belongs to the universal ribosomal protein uS4 family. Part of the 30S ribosomal subunit. Contacts protein S5. The interaction surface between S4 and S5 is involved in control of translational fidelity.

One of the primary rRNA binding proteins, it binds directly to 16S rRNA where it nucleates assembly of the body of the 30S subunit. In terms of biological role, with S5 and S12 plays an important role in translational accuracy. This is Small ribosomal subunit protein uS4 from Roseiflexus castenholzii (strain DSM 13941 / HLO8).